We begin with the raw amino-acid sequence, 279 residues long: Tryptophan synthase alpha chain (279 aa).

Residues Glu49 and Asp60 each act as proton acceptor in the active site.

It belongs to the TrpA family. As to quaternary structure, tetramer of two alpha and two beta chains.

The catalysed reaction is (1S,2R)-1-C-(indol-3-yl)glycerol 3-phosphate + L-serine = D-glyceraldehyde 3-phosphate + L-tryptophan + H2O. Its pathway is amino-acid biosynthesis; L-tryptophan biosynthesis; L-tryptophan from chorismate: step 5/5. The alpha subunit is responsible for the aldol cleavage of indoleglycerol phosphate to indole and glyceraldehyde 3-phosphate. The sequence is that of Tryptophan synthase alpha chain from Nitrosospira multiformis (strain ATCC 25196 / NCIMB 11849 / C 71).